The sequence spans 90 residues: Small ribosomal subunit protein uS15 (90 aa).

Belongs to the universal ribosomal protein uS15 family. Part of the 30S ribosomal subunit. Forms a bridge to the 50S subunit in the 70S ribosome, contacting the 23S rRNA.

One of the primary rRNA binding proteins, it binds directly to 16S rRNA where it helps nucleate assembly of the platform of the 30S subunit by binding and bridging several RNA helices of the 16S rRNA. In terms of biological role, forms an intersubunit bridge (bridge B4) with the 23S rRNA of the 50S subunit in the ribosome. This is Small ribosomal subunit protein uS15 from Tropheryma whipplei (strain TW08/27) (Whipple's bacillus).